A 595-amino-acid polypeptide reads, in one-letter code: Sorting nexin-9 (595 aa).

The region spanning 1 to 62 (MATKARVMYD…PTDYVEILPS (62 aa)) is the SH3 domain. Residues 91–201 (SSSAASNNHQ…GNSRASSSSM (111 aa)) are disordered. Composition is skewed to polar residues over residues 111–121 (WSASKSGNWES) and 135–145 (QRNTNTPNNWD). Residues S116 and S121 each carry the phosphoserine modification. Residues 160-169 (GDDDDWDEDW) are compositionally biased toward acidic residues. Positions 191-201 (RGNSRASSSSM) are enriched in polar residues. 2 positions are modified to phosphoserine: S197 and S200. The segment at 201–213 (MKIPLNKFPGFAK) is critical for tubulation activity. Position 216 is a phosphothreonine (T216). Y239 bears the Phosphotyrosine mark. The 112-residue stretch at 250 to 361 (FDCVVADPRK…QFLNFRDEKE (112 aa)) folds into the PX domain. Residues R286, K288, and R327 each coordinate a 1,2-diacyl-sn-glycero-3-phospho-(1D-myo-inositol-4,5-bisphosphate). K288 bears the N6-acetyllysine mark. Positions 392-595 (LVEIEQKCEA…RQALSRFPVM (204 aa)) constitute a BAR domain.

Belongs to the sorting nexin family. As to quaternary structure, homodimer, and homooligomer. Heterodimer with SNX18. Interacts with ITCH. Interacts (via SH3 domain) with TNK2, WASL and ACTR3. Identified in a complex with TNK2 and clathrin heavy chains. Identified in a complex with the AP-2 complex, clathrin and DNM2. Interacts (via SH3 domain) with DNM1 and DNM2. Identified in an oligomeric complex containing DNM1 and SNX9. Interacts with FCHSD1. Interacts with ADAM9 and ADAM15 cytoplasmic tails. Ubiquitinated by ITCH. In terms of processing, phosphorylated on tyrosine residues by TNK2. Phosphorylation promotes its activity in the degradation of EGFR. Widely expressed, with highest levels in heart and placenta, and lowest levels in thymus and peripheral blood leukocytes.

It localises to the cytoplasmic vesicle membrane. Its subcellular location is the cell membrane. The protein localises to the cytoplasmic vesicle. It is found in the clathrin-coated vesicle. The protein resides in the golgi apparatus. It localises to the trans-Golgi network. Its subcellular location is the cell projection. The protein localises to the ruffle. It is found in the cytoplasm. Involved in endocytosis and intracellular vesicle trafficking, both during interphase and at the end of mitosis. Required for efficient progress through mitosis and cytokinesis. Required for normal formation of the cleavage furrow at the end of mitosis. Plays a role in endocytosis via clathrin-coated pits, but also clathrin-independent, actin-dependent fluid-phase endocytosis. Plays a role in macropinocytosis. Promotes internalization of TNFR. Promotes degradation of EGFR after EGF signaling. Stimulates the GTPase activity of DNM1. Promotes DNM1 oligomerization. Promotes activation of the Arp2/3 complex by WASL, and thereby plays a role in the reorganization of the F-actin cytoskeleton. Binds to membranes enriched in phosphatidylinositol 4,5-bisphosphate and promotes membrane tubulation. Has lower affinity for membranes enriched in phosphatidylinositol 3-phosphate. This Homo sapiens (Human) protein is Sorting nexin-9 (SNX9).